Here is a 260-residue protein sequence, read N- to C-terminus: Cell division protein DivIB (260 aa).

The Cytoplasmic portion of the chain corresponds to 1–25 (MGAQDQNGKNHGGLFRDFQNRNVKK). Residues 26-46 (MWPLVMPITIILLVMIFMISS) traverse the membrane as a helical segment. Residues 47–260 (YSRVKKVTVS…STKTTSVQGY (214 aa)) lie on the Extracellular side of the membrane. The region spanning 48–119 (SRVKKVTVSG…NQVKIKVEEY (72 aa)) is the POTRA domain.

It belongs to the FtsQ/DivIB family. DivIB subfamily.

The protein resides in the cell membrane. In terms of biological role, cell division protein that may be involved in stabilizing or promoting the assembly of the division complex. This chain is Cell division protein DivIB, found in Lentilactobacillus buchneri (strain NRRL B-30929) (Lactobacillus buchneri).